The chain runs to 493 residues: Guanosine-5'-triphosphate,3'-diphosphate pyrophosphatase (493 aa).

Belongs to the GppA/Ppx family. GppA subfamily.

It carries out the reaction guanosine 3'-diphosphate 5'-triphosphate + H2O = guanosine 3',5'-bis(diphosphate) + phosphate + H(+). Its pathway is purine metabolism; ppGpp biosynthesis; ppGpp from GTP: step 2/2. Its function is as follows. Catalyzes the conversion of pppGpp to ppGpp. Guanosine pentaphosphate (pppGpp) is a cytoplasmic signaling molecule which together with ppGpp controls the 'stringent response', an adaptive process that allows bacteria to respond to amino acid starvation, resulting in the coordinated regulation of numerous cellular activities. This is Guanosine-5'-triphosphate,3'-diphosphate pyrophosphatase from Salmonella agona (strain SL483).